The following is a 1586-amino-acid chain: COP1-interactive protein 1 (1586 aa).

The region spanning 10 to 84 is the NAB domain; sequence LKSFFEPHFD…RQYDDLTGEI (75 aa). The segment at 88-119 is disordered; the sequence is VNGKGESSSSSSSDSDSDHSSKRKVKRNGNGK. Coiled-coil stretches lie at residues 128–411, 437–1196, 1225–1336, and 1372–1406; these read TGAL…LKES, ASEL…LKEE, LETL…TEAT, and MESL…SNQK. 5 LRR repeats span residues 173 to 187, 188 to 210, 216 to 239, 261 to 285, and 287 to 309; these read SEEI…TEKL, EDEK…VAGK, NQKL…GIKR, TSNL…MNSA, and EENK…GQTT. Over residues 249 to 262 the composition is skewed to basic and acidic residues; sequence DWKTTSDQLKDETS. Positions 249–286 are disordered; that stretch reads DWKTTSDQLKDETSNLKQQLEASEQRVSELTSGMNSAE. Residues 325–353 are disordered; sequence KEKESEHSSLVELHKTHERESSSQVKELE. LRR repeat units lie at residues 384–410, 437–461, 473–498, 560–586, 613–637, 649–674, 768–792, 824–850, 856–880, 902–929, 944–968, 990–1014, 1077–1101, 1120–1144, 1195–1220, 1247–1272, 1372–1396, 1398–1417, 1426–1448, and 1450–1474; these read IAEL…QLKE, ASEL…LKAA, VETM…KLKD, VSEL…LKDA, LEIM…ELKD, LSEL…LNAA, LAES…AHKR, VKEL…LNSS, ESTI…LFSL, LRGL…LKAA, QIMV…ESKL, ISEL…LEDN, RAEL…SEEA, EEII…KIKG, VQMH…NLKN, MESL…ISNI, VKLR…LTEK, AKHL…TYRG, and IKEI…LTEK. The interval 430–456 is disordered; it reads QRDSSTRASELEAQLESSKQQVSDLSA. Over residues 444–455 the composition is skewed to polar residues; the sequence is LESSKQQVSDLS. Positions 965-985 are disordered; it reads LKAAEEESRTMSTKISETSDE. Residues 1496–1530 are a coiled coil; it reads VIERNHEKEKMNKEIEKKDEEIKKLGGKVREDEKE.

Interacts with COP1 coiled-coil region. In terms of tissue distribution, mainly expressed in photosynthetic and vascular tissues. Accumulates in both dark-grown and light-grown seedlings roots and shoots, leaves and flowers (at protein level).

It localises to the cell membrane. The protein localises to the cytoplasm. Its subcellular location is the cytoskeleton. Functionally, positive regulator of abscisic acid (ABA)-mediated signaling pathways involved in abiotic stress responses (e.g. osmotic stress) and leading to various plant adaptation (e.g. stomata closure). The polypeptide is COP1-interactive protein 1 (Arabidopsis thaliana (Mouse-ear cress)).